A 779-amino-acid chain; its full sequence is MNNSLENTISFEEYIRVKARSVPQHRMKEFLDSLASKGPEALQEFQQTATTTMVYQQGGNCIYTDSTEVAGSLLELACPVTTSVQPQTQPEQQIQVQQPQQVQVQVQVQQSPQQVSAQQLSPQLTVHQPAEQPIHVQVQIQGQAAQPAAPSIQTPSLQSPSPSQLQAAQIQVQHMQAAQQIQAPEIPEEHIPHQQIQAQLVAGQSLAGGQQIQIQTVGALSPPPSQQGSPREGERRVGTASVLQPVKKRKVDMPITVSYAISGQPVATVLAIPQGQQQSYVSLRPDLLTVDSAHLYSATGTITSPTGETWTIPVYSAQPRGDPQQQSITHIAIPQEAYNAVHVSGSPTALAAVKLEDDKEKMVGTTSVVKNSHEEVVQTLANSLFPAQFMNGNIHIPVAVQAVAGTYQNTAQTVHIWDPQQQPQQQTPQEQTPPPPQQQQQQQLQVTCSAQTVQVAEVEPQSQPQPSPELLLPNSLKPEEGLEVWKNWAQTKNAELEKDAQNRLAPIGRRQLLRFQEDLISSAVAELNYGLCLMTREARNGEGEPYDPDVLYYIFLCIQKYLFENGRVDDIFSDLYYVRFTEWLHEVLKDVQPRVTPLGYVLPSHVTEEMLWECKQLGAHSPSTLLTTLMFFNTKYFLLKTVDQHMKLAFSKVLRQTKKNPSNPKDKSTSIRYLKALGIHQTGQKVTDDMYAEQTENPENPLRCPIKLYDFYLFKCPQSVKGRNDTFYLTPEPVVAPNSPIWYSVQPISREQMGQMLTRILVIREIQEAIAVASASTMH.

Position 1 is an N-acetylmethionine (methionine 1). Residues glutamate 6 to threonine 48 enclose the CARD domain. Disordered stretches follow at residues glutamine 141–serine 163 and alanine 219–valine 242. Serine 346 carries the post-translational modification Phosphoserine. Residues lysine 354 and lysine 359 each participate in a glycyl lysine isopeptide (Lys-Gly) (interchain with G-Cter in SUMO2) cross-link. Low complexity predominate over residues glutamine 420–glutamate 430. The tract at residues glutamine 420–glutamine 443 is disordered. At serine 467 the chain carries Phosphoserine.

The protein resides in the nucleus. It localises to the cytoplasm. Its subcellular location is the cell membrane. Functionally, transcriptional regulator that acts as a mediator of the integrated stress response (ISR) through transcriptional control of protein homeostasis under conditions of ER stress. Controls the outcome of the unfolded protein response (UPR), an ER-stress response pathway that either promotes recovery of ER homeostasis and cell survival, or triggers the terminal UPR which elicits programmed cell death when ER stress is prolonged and unresolved. ER stress induces QRICH1 translation by a ribosome translation re-initiation mechanism in response to EIF2S1/eIF-2-alpha phosphorylation, and stress-induced QRICH1 regulates a transcriptional program associated with protein translation, protein secretion-mediated proteotoxicity and cell death during the terminal UPR. May cooperate with ATF4 transcription factor signaling to regulate ER homeostasis which is critical for cell viability. Up-regulates CASP3/caspase-3 activity in epithelial cells under ER stress. Central regulator of proteotoxicity associated with ER stress-mediated inflammatory diseases in the intestines and liver. Involved in chondrocyte hypertrophy, a process required for normal longitudinal bone growth. The protein is Transcriptional regulator QRICH1 (QRICH1) of Bos taurus (Bovine).